Consider the following 267-residue polypeptide: Tryptophan synthase alpha chain (267 aa).

Residues glutamate 43 and aspartate 54 each act as proton acceptor in the active site.

Belongs to the TrpA family. Tetramer of two alpha and two beta chains.

The catalysed reaction is (1S,2R)-1-C-(indol-3-yl)glycerol 3-phosphate + L-serine = D-glyceraldehyde 3-phosphate + L-tryptophan + H2O. The protein operates within amino-acid biosynthesis; L-tryptophan biosynthesis; L-tryptophan from chorismate: step 5/5. In terms of biological role, the alpha subunit is responsible for the aldol cleavage of indoleglycerol phosphate to indole and glyceraldehyde 3-phosphate. The sequence is that of Tryptophan synthase alpha chain from Bacillus pumilus (strain SAFR-032).